Consider the following 503-residue polypeptide: WAS/WASL-interacting protein family member 1 (503 aa).

Residues 1-14 are compositionally biased toward pro residues; the sequence is MPVPPPPAPPPPPT. The tract at residues 1–503 is disordered; that stretch reads MPVPPPPAPP…GAPPLPPIPR (503 aa). Residues 21 to 31 show a composition bias toward polar residues; the sequence is EKPTLNKTEQA. The WH2 domain maps to 32–49; it reads GRNALLSDISKGKKLKKT. Residue Arg-33 is modified to Asymmetric dimethylarginine. Residues 45–48 are binds actin; sequence KLKK. A compositionally biased stretch (gly residues) spans 65 to 104; it reads AGAGGGGGGFGGGGGFGGGGGGGGGGSFGGGGPPGLGGLF. A compositionally biased stretch (low complexity) spans 121–137; it reads SGGSRPPLLPPGGRSTS. Omega-N-methylarginine is present on residues Arg-125 and Arg-134. Pro residues-rich tracts occupy residues 141–154, 161–174, 182–191, and 204–223; these read FSPP…PVPS, PPEP…PPRP, SIPPPVPSTP, and PPVP…PPFP. Position 142 is a phosphoserine (Ser-142). Ser-234 carries the phosphoserine modification. The segment covering 238 to 247 has biased composition (low complexity); it reads SPLSSSSPFS. 2 stretches are compositionally biased toward pro residues: residues 282–298 and 306–323; these read VPPP…PSTP and APPP…PLPP. The residue at position 340 (Ser-340) is a Phosphoserine. Phosphothreonine is present on Thr-345. Pro residues predominate over residues 346–371; it reads PPLPSPGRSGPLPPPPSERPPPPVRD. Residue Ser-350 is modified to Phosphoserine. XRSGPXPPXP motif repeat units follow at residues 352–361, 374–383, and 410–419; these read GRSGPLPPPP and PRSGPRPPLP. A compositionally biased stretch (pro residues) spans 413–434; it reads GPRPPLPPDRPSAGAPPPPPPS. Residues 480-494 show a composition bias toward basic and acidic residues; the sequence is ARNESRSGSNRRERG.

The protein belongs to the verprolin family. Binds to WAS, profilin and actin. Binds to WASL. Interacts with DBNL. Interacts with FNBP1L (via the SH3 domain). Highly expressed in peripheral blood mononuclear cells, spleen, placenta, small intestine, colon and thymus. Lower expression in ovary, heart, brain, lung, liver, skeletal muscle, kidney, pancreas, prostate and testis.

It is found in the cytoplasmic vesicle. Its subcellular location is the cytoplasm. The protein resides in the cytoskeleton. It localises to the cell projection. The protein localises to the ruffle. In terms of biological role, plays a role in the reorganization of the actin cytoskeleton. Contributes with NCK1 and GRB2 in the recruitment and activation of WASL. May participate in regulating the subcellular localization of WASL, resulting in the disassembly of stress fibers in favor of filopodia formation. Plays a role in the formation of cell ruffles. Plays an important role in the intracellular motility of vaccinia virus by functioning as an adapter for recruiting WASL to vaccinia virus. The sequence is that of WAS/WASL-interacting protein family member 1 (WIPF1) from Homo sapiens (Human).